Here is a 127-residue protein sequence, read N- to C-terminus: MTAHTHDGTRTWRTGRQATTLLALLAGVFGGAASCAAPIQADMMGNAFLTALTNAGIAYDQPATTVALGRSVCPMVVAPGGTFESITSRMAEINGMSRDMASTFTIVAIGTYCPAVIAPLMPNRLQA.

Residues 1–34 (MTAHTHDGTRTWRTGRQATTLLALLAGVFGGAAS) form the signal peptide. A lipid anchor (N-palmitoyl cysteine) is attached at cysteine 35. Cysteine 35 carries the S-diacylglycerol cysteine lipid modification. Residues 35 to 99 (CAAPIQADMM…MAEINGMSRD (65 aa)) are Extracellular-facing. Residues 100-120 (MASTFTIVAIGTYCPAVIAPL) traverse the membrane as a helical segment. Residues 121 to 127 (MPNRLQA) lie on the Cytoplasmic side of the membrane.

May interact with sensor protein KdpD. Post-translationally, modified by Lgt on Cys-35 with an S-linked diacylglycerol, signal peptide is removed by LspA, modified by Lnt with amide-linked fatty acid.

The protein resides in the cell membrane. Functionally, overexpression induces expression of sensor protein kdpD gene at low K(+) concentrations (0 and 250 uM, tested in M.smegatis). The sequence is that of Putative lipoprotein LprJ (lprJ) from Mycobacterium tuberculosis (strain ATCC 25618 / H37Rv).